Reading from the N-terminus, the 196-residue chain is MAIFEINNSFLICAVSIALNPLLWNIAARSEYNHKTLTKLANGDSKKACYMLAACIFVAGIVRDLIYQNALKQQPTLGIFMNPLVQGIAKLIFCFGSVLVLSSMYKLGLVGTYLGDYFGFLLPERVSGFPFNVNDNPMYNGSTLCFLSTALRYGKVAGLLLTLEVFFVYRIALKFEEPFTAKIYAARDSKQAKKSE.

Residue M1 is a topological domain, lumenal. The helical intramembrane region spans 2–28; the sequence is AIFEINNSFLICAVSIALNPLLWNIAA. Topologically, residues 29-40 are lumenal; that stretch reads RSEYNHKTLTKL. The helical transmembrane segment at 41 to 62 threads the bilayer; the sequence is ANGDSKKACYMLAACIFVAGIV. The Cytoplasmic segment spans residues 63–89; the sequence is RDLIYQNALKQQPTLGIFMNPLVQGIA. A helical transmembrane segment spans residues 90-110; that stretch reads KLIFCFGSVLVLSSMYKLGLV. 94-96 provides a ligand contact to S-adenosyl-L-methionine; sequence CFG. Over 111 to 153 the chain is Lumenal; it reads GTYLGDYFGFLLPERVSGFPFNVNDNPMYNGSTLCFLSTALRY. The chain crosses the membrane as a helical span at residues 154 to 174; that stretch reads GKVAGLLLTLEVFFVYRIALK. Over 175 to 196 the chain is Cytoplasmic; it reads FEEPFTAKIYAARDSKQAKKSE. Position 176–177 (176–177) interacts with S-adenosyl-L-methionine; that stretch reads EE.

The protein belongs to the class VI-like SAM-binding methyltransferase superfamily. PEMT/PEM2 methyltransferase family.

The protein localises to the endoplasmic reticulum membrane. It is found in the mitochondrion membrane. The catalysed reaction is a 1,2-diacyl-sn-glycero-3-phospho-N-methylethanolamine + S-adenosyl-L-methionine = a 1,2-diacyl-sn-glycero-3-phospho-N,N-dimethylethanolamine + S-adenosyl-L-homocysteine + H(+). It carries out the reaction a 1,2-diacyl-sn-glycero-3-phospho-N,N-dimethylethanolamine + S-adenosyl-L-methionine = a 1,2-diacyl-sn-glycero-3-phosphocholine + S-adenosyl-L-homocysteine + H(+). Its pathway is phospholipid metabolism; phosphatidylcholine biosynthesis. In terms of biological role, catalyzes the second two steps of the methylation pathway of phosphatidylcholine biosynthesis, the SAM-dependent methylation of phosphatidylmonomethylethanolamine (PMME) to phosphatidyldimethylethanolamine (PDME) and of PDME to phosphatidylcholine (PC). The protein is Phosphatidyl-N-methylethanolamine N-methyltransferase of Schizosaccharomyces pombe (strain 972 / ATCC 24843) (Fission yeast).